The following is a 444-amino-acid chain: L-seryl-tRNA(Sec) selenium transferase (444 aa).

N6-(pyridoxal phosphate)lysine is present on K284.

Belongs to the SelA family. Pyridoxal 5'-phosphate is required as a cofactor.

It is found in the cytoplasm. It catalyses the reaction L-seryl-tRNA(Sec) + selenophosphate + H(+) = L-selenocysteinyl-tRNA(Sec) + phosphate. It participates in aminoacyl-tRNA biosynthesis; selenocysteinyl-tRNA(Sec) biosynthesis; selenocysteinyl-tRNA(Sec) from L-seryl-tRNA(Sec) (bacterial route): step 1/1. Functionally, converts seryl-tRNA(Sec) to selenocysteinyl-tRNA(Sec) required for selenoprotein biosynthesis. In Wolinella succinogenes (strain ATCC 29543 / DSM 1740 / CCUG 13145 / JCM 31913 / LMG 7466 / NCTC 11488 / FDC 602W) (Vibrio succinogenes), this protein is L-seryl-tRNA(Sec) selenium transferase.